The primary structure comprises 485 residues: E3 ubiquitin-protein ligase TRIM68 (485 aa).

The segment at 16–61 adopts an RING-type zinc-finger fold; sequence CPICMTFLREPMSIDCGHSFCHSCLSGLWEIPGESQNWGYTCPLCR. The B box-type zinc-finger motif lies at 93 to 134; it reads LKGDLCERHGEKLKMFCKEDVLIMCEACSQSPEHEAHSVVPM. Zn(2+)-binding residues include Cys-98, His-101, Cys-120, and His-126. Residues 207–239 adopt a coiled-coil conformation; that stretch reads AEVAAALASLQREAAETMQKLELNHSELIQQSQ. The 197-residue stretch at 285 to 481 folds into the B30.2/SPRY domain; it reads LKTDCRVLGL…NTAPLAICSL (197 aa).

It belongs to the TRIM/RBCC family. As to quaternary structure, interacts with AR/androgen receptor (via ligand-binding domain). Interacts with KAT5/TIP60. Post-translationally, auto-ubiquitinated. As to expression, widely expressed. Expressed at high levels in prostate cancer cell lines. Up-regulation could be restricted to androgen-dependent cells.

The protein localises to the cytoplasm. The protein resides in the perinuclear region. It localises to the nucleus. It carries out the reaction S-ubiquitinyl-[E2 ubiquitin-conjugating enzyme]-L-cysteine + [acceptor protein]-L-lysine = [E2 ubiquitin-conjugating enzyme]-L-cysteine + N(6)-ubiquitinyl-[acceptor protein]-L-lysine.. The protein operates within protein modification; protein ubiquitination. Its function is as follows. Functions as a ubiquitin E3 ligase. Acts as a coactivator of androgen receptor (AR) depending on its ubiquitin ligase activity. The protein is E3 ubiquitin-protein ligase TRIM68 (TRIM68) of Homo sapiens (Human).